The sequence spans 131 residues: Fatty acid-binding protein (131 aa).

(5Z,8Z,11Z,14Z)-eicosatetraenoate is bound by residues Arg106 and 126–128 (RPY). (9Z)-octadecenoate is bound by residues Arg106 and 126–128 (RPY).

Belongs to the calycin superfamily. Fatty-acid binding protein (FABP) family.

The protein localises to the cytoplasm. Its function is as follows. FABPs are thought to play a role in the intracellular transport of long-chain fatty acids and their acyl-CoA esters. The sequence is that of Fatty acid-binding protein from Lepidoglyphus destructor (Storage mite).